The primary structure comprises 572 residues: Urease subunit alpha (572 aa).

Residues 134 to 572 (AGIDTHIHLI…AAMNQLYFFG (439 aa)) form the Urease domain. The Ni(2+) site is built by His139, His141, and Lys222. Lys222 bears the N6-carboxylysine mark. Substrate is bound at residue His224. Residues His251 and His277 each contribute to the Ni(2+) site. Residue His325 is the Proton donor of the active site. A Ni(2+)-binding site is contributed by Asp365.

Belongs to the metallo-dependent hydrolases superfamily. Urease alpha subunit family. As to quaternary structure, heterotrimer of UreA (gamma), UreB (beta) and UreC (alpha) subunits. Three heterotrimers associate to form the active enzyme. Ni cation is required as a cofactor. Post-translationally, carboxylation allows a single lysine to coordinate two nickel ions.

It is found in the cytoplasm. The catalysed reaction is urea + 2 H2O + H(+) = hydrogencarbonate + 2 NH4(+). The protein operates within nitrogen metabolism; urea degradation; CO(2) and NH(3) from urea (urease route): step 1/1. In Edwardsiella ictaluri (strain 93-146), this protein is Urease subunit alpha.